Reading from the N-terminus, the 397-residue chain is Cell division protein DivIB (397 aa).

Residues 1 to 138 (MTTKDKGDQK…RIERIHLYRA (138 aa)) are Cytoplasmic-facing. The segment covering 24-37 (QEYLEKKSQEKASE) has biased composition (basic and acidic residues). Residues 24-115 (QEYLEKKSQE…DRTEKFIGQA (92 aa)) are disordered. The segment covering 74–103 (ASDDDETNESEESEDVEEPEEENIEESSDV) has biased composition (acidic residues). A helical transmembrane segment spans residues 139–159 (LPVLVISSLLILLSLYFITPL). The 72-residue stretch at 160 to 231 (GSLKNLVVTG…ITFKIQVTEY (72 aa)) folds into the POTRA domain. At 160 to 397 (GSLKNLVVTG…PSDVTDETNN (238 aa)) the chain is on the extracellular side. The disordered stretch occupies residues 360 to 397 (LVQKEEQDQEQEKEESSEETVPGETEAAPSDVTDETNN). Residues 366–377 (QDQEQEKEESSE) show a composition bias toward acidic residues.

This sequence belongs to the FtsQ/DivIB family. DivIB subfamily.

Its subcellular location is the cell membrane. Functionally, cell division protein that may be involved in stabilizing or promoting the assembly of the division complex. The polypeptide is Cell division protein DivIB (Streptococcus gordonii (strain Challis / ATCC 35105 / BCRC 15272 / CH1 / DL1 / V288)).